Here is a 1215-residue protein sequence, read N- to C-terminus: DNA-directed RNA polymerase subunit beta' (1215 aa).

Positions 60, 62, 75, and 78 each coordinate Zn(2+). The Mg(2+) site is built by aspartate 450, aspartate 452, and aspartate 454. Residues cysteine 818, cysteine 892, cysteine 899, and cysteine 902 each coordinate Zn(2+).

Belongs to the RNA polymerase beta' chain family. The RNAP catalytic core consists of 2 alpha, 1 beta, 1 beta' and 1 omega subunit. When a sigma factor is associated with the core the holoenzyme is formed, which can initiate transcription. It depends on Mg(2+) as a cofactor. Zn(2+) serves as cofactor.

It catalyses the reaction RNA(n) + a ribonucleoside 5'-triphosphate = RNA(n+1) + diphosphate. In terms of biological role, DNA-dependent RNA polymerase catalyzes the transcription of DNA into RNA using the four ribonucleoside triphosphates as substrates. In Streptococcus sanguinis (strain SK36), this protein is DNA-directed RNA polymerase subunit beta'.